A 529-amino-acid chain; its full sequence is [Pyruvate dehydrogenase [acetyl-transferring]]-phosphatase 2, mitochondrial (529 aa).

A mitochondrion-targeting transit peptide spans 1 to 66 (MSSTVSYWIL…FTLCKAYRHT (66 aa)). One can recognise a PPM-type phosphatase domain in the interval 106-517 (VLRFESNQLA…DDITVTVVYF (412 aa)). The Mn(2+) site is built by Asp-141, Gly-142, Asp-412, and Asp-508.

Belongs to the PP2C family. Requires Mg(2+) as cofactor.

Its subcellular location is the mitochondrion. The enzyme catalyses O-phospho-L-seryl-[pyruvate dehydrogenase E1 alpha subunit] + H2O = L-seryl-[pyruvate dehydrogenase E1 alpha subunit] + phosphate. Its function is as follows. Mitochondrial enzyme that catalyzes the dephosphorylation and concomitant reactivation of the alpha subunit of the E1 component of the pyruvate dehydrogenase complex (PDC), thereby stimulating the conversion of pyruvate into acetyl-CoA. Acts as a crucial regulator of T cell metabolism and function, with a particular focus on T-helper Th17. In Homo sapiens (Human), this protein is [Pyruvate dehydrogenase [acetyl-transferring]]-phosphatase 2, mitochondrial.